The following is a 460-amino-acid chain: Elongation factor 1-alpha-B (460 aa).

G2 carries the n,N,N-trimethylglycine modification. An N6,N6-dimethyllysine; alternate modification is found at K3. K3 bears the N6-methyllysine; alternate mark. The 236-residue stretch at 5–240 folds into the tr-type G domain; the sequence is KGHINVVVIG…DSIEPPARPT (236 aa). Positions 14 to 21 are G1; the sequence is GHVDSGKS. Position 14–21 (14–21) interacts with GTP; it reads GHVDSGKS. An N6-methyllysine modification is found at K30. Residues 70–74 form a G2 region; that stretch reads GITID. K79 is modified (N6,N6,N6-trimethyllysine). Positions 91-94 are G3; sequence DAPG. GTP contacts are provided by residues 91 to 95 and 153 to 156; these read DAPGH and NKMD. The tract at residues 153–156 is G4; sequence NKMD. The G5 stretch occupies residues 192-194; that stretch reads SGF. Residue K316 is modified to N6,N6-dimethyllysine; alternate. K316 carries the N6-methyllysine; alternate modification. Residue K390 is modified to N6-methyllysine.

The protein belongs to the TRAFAC class translation factor GTPase superfamily. Classic translation factor GTPase family. EF-Tu/EF-1A subfamily.

Its subcellular location is the cytoplasm. Its function is as follows. This protein promotes the GTP-dependent binding of aminoacyl-tRNA to the A-site of ribosomes during protein biosynthesis. The chain is Elongation factor 1-alpha-B (tef102) from Schizosaccharomyces pombe (strain 972 / ATCC 24843) (Fission yeast).